Reading from the N-terminus, the 255-residue chain is tRNA pseudouridine synthase A (255 aa).

Residue D43 is the Nucleophile of the active site. Y94 is a substrate binding site.

This sequence belongs to the tRNA pseudouridine synthase TruA family.

The catalysed reaction is uridine(38/39/40) in tRNA = pseudouridine(38/39/40) in tRNA. Its function is as follows. Formation of pseudouridine at positions 38, 39 and 40 in the anticodon stem and loop of transfer RNAs. This Pyrobaculum neutrophilum (strain DSM 2338 / JCM 9278 / NBRC 100436 / V24Sta) (Thermoproteus neutrophilus) protein is tRNA pseudouridine synthase A.